The following is a 357-amino-acid chain: Uroporphyrinogen decarboxylase (357 aa).

Substrate contacts are provided by residues Arg30–Arg34, Asp79, Tyr154, Ser209, and His336.

This sequence belongs to the uroporphyrinogen decarboxylase family. Homodimer.

It localises to the cytoplasm. It carries out the reaction uroporphyrinogen III + 4 H(+) = coproporphyrinogen III + 4 CO2. Its pathway is porphyrin-containing compound metabolism; protoporphyrin-IX biosynthesis; coproporphyrinogen-III from 5-aminolevulinate: step 4/4. Its function is as follows. Catalyzes the decarboxylation of four acetate groups of uroporphyrinogen-III to yield coproporphyrinogen-III. The protein is Uroporphyrinogen decarboxylase of Mycobacterium leprae (strain Br4923).